We begin with the raw amino-acid sequence, 274 residues long: MSTYFISDIHGCYEEFRILLEKSSFNDKKDYLWIAGDLVSRGPDSLKVVKYLYSLKDRVQIVLGNHDINLIAVHAGIKDNKKENYFDEFLSSPDSVELINWLRCQSFLKVDEKRKIIMSHAGISPQWDINIAKVCALEIEDRLSHKNYALFLKEIYHNNIDFWRLNLNQLDRLRYSMNSFTRMRYCYPDGRLNMFCKKSPDFVKYPLRPWFLMPSSISKVYSIFFGHWSSLKGTHVPKPFFPLDAGCCWGEELVMLRWEDGKWFSQAYLSKKCI.

Belongs to the Ap4A hydrolase family.

The enzyme catalyses P(1),P(4)-bis(5'-adenosyl) tetraphosphate + H2O = 2 ADP + 2 H(+). Functionally, hydrolyzes diadenosine 5',5'''-P1,P4-tetraphosphate to yield ADP. The sequence is that of Bis(5'-nucleosyl)-tetraphosphatase, symmetrical (apaH) from Buchnera aphidicola subsp. Acyrthosiphon pisum (strain APS) (Acyrthosiphon pisum symbiotic bacterium).